An 85-amino-acid polypeptide reads, in one-letter code: Large ribosomal subunit protein bL27 (85 aa).

The disordered stretch occupies residues 1 to 20 (MAHKKAGGSTRNGRDSEAKR).

The protein belongs to the bacterial ribosomal protein bL27 family.

This Klebsiella pneumoniae (strain 342) protein is Large ribosomal subunit protein bL27.